We begin with the raw amino-acid sequence, 159 residues long: Large ribosomal subunit protein uL10 (159 aa).

This sequence belongs to the universal ribosomal protein uL10 family. As to quaternary structure, part of the ribosomal stalk of the 50S ribosomal subunit. The N-terminus interacts with L11 and the large rRNA to form the base of the stalk. The C-terminus forms an elongated spine to which L12 dimers bind in a sequential fashion forming a multimeric L10(L12)X complex.

Functionally, forms part of the ribosomal stalk, playing a central role in the interaction of the ribosome with GTP-bound translation factors. This is Large ribosomal subunit protein uL10 from Nautilia profundicola (strain ATCC BAA-1463 / DSM 18972 / AmH).